Consider the following 571-residue polypeptide: MRTSQYLLSTLKETPSDAVVISHQLMLRAGMIRKLASGLYTWLPLGLRALRKAEAIVREEMDKAGALEVLMPAIQPAELWQESGRWEQYGPELLRIRDRHAREFCVGPTHEEVITDLARNELNSYKQLPINFYQIQTKFRDEIRPRFGLMRGREFLMKDAYSFHLTQESLQETYDRMHQAYCNIFSRLGLEFRPVQADTGSIGGTGSHEFHVLAASGEDDIAFSDSSDYAANIEKAEAIPREKARAAASEELRLVDTPDARTIDELVRQFGLPVEKTIKTLVVQGAEEGRLVALIVRGDHELNEIKAANLEQVASPLAFASEAEIRAAIGAGPGSLGPLNLPIPAIVDRSVTLLSDFAAGANLDGKHYFGLNWERDLPLPQVADLRNVVEGDPSPDGQGSLVIKRGIEVGHIFQLGTKYSEAMNCKVLGENGKPVTLIMGCYGIGVSRVVAAAIEQNYDERGILWPQALAPFQIALVPMKYESAAVREATDRLYAELVAAGYEVLLDDRDKKTSPGVKFADMELIGIPHRIVVSERGLAEGTLEYKGRRETEVQAIPAADLITFLGNRIGR.

This sequence belongs to the class-II aminoacyl-tRNA synthetase family. ProS type 1 subfamily. Homodimer.

The protein localises to the cytoplasm. It carries out the reaction tRNA(Pro) + L-proline + ATP = L-prolyl-tRNA(Pro) + AMP + diphosphate. Its function is as follows. Catalyzes the attachment of proline to tRNA(Pro) in a two-step reaction: proline is first activated by ATP to form Pro-AMP and then transferred to the acceptor end of tRNA(Pro). As ProRS can inadvertently accommodate and process non-cognate amino acids such as alanine and cysteine, to avoid such errors it has two additional distinct editing activities against alanine. One activity is designated as 'pretransfer' editing and involves the tRNA(Pro)-independent hydrolysis of activated Ala-AMP. The other activity is designated 'posttransfer' editing and involves deacylation of mischarged Ala-tRNA(Pro). The misacylated Cys-tRNA(Pro) is not edited by ProRS. This Azotobacter vinelandii (strain DJ / ATCC BAA-1303) protein is Proline--tRNA ligase.